The following is a 59-amino-acid chain: Small ribosomal subunit protein bS21 (59 aa).

A disordered region spans residues 27–59 (GLMAEMRKREHYEKPSVRRKKKAQARNKKKRYA). A compositionally biased stretch (basic and acidic residues) spans 31–42 (EMRKREHYEKPS). Basic residues predominate over residues 43-59 (VRRKKKAQARNKKKRYA).

Belongs to the bacterial ribosomal protein bS21 family.

The sequence is that of Small ribosomal subunit protein bS21 from Carboxydothermus hydrogenoformans (strain ATCC BAA-161 / DSM 6008 / Z-2901).